The following is a 227-amino-acid chain: MAHISQISSFLSIVLIFLALCITLFTNPTLSLPALKLNPFQDFCVADLQATPTNSGYPCKSQVTSEDFFYSGLNTPLNTSNPKGIAANPANLLTFPGLNTLGISMYNVAIAPGGYNQPHSHPGVTEAGVVIEGSVLVGFLTTNYTLYSKVIGPGDMFVIPPGLIHYEGNVGKTQCRLLTVVADDLPSEVGVPHTLLATKPAIPNEVLISAFKADSKTINMLRSKFTA.

An N-terminal signal peptide occupies residues Met-1–Thr-26. Residues Cys-44 and Cys-59 are joined by a disulfide bond. The Cupin type-1 domain occupies Ser-71–Asn-219. Residue Asn-78 is glycosylated (N-linked (GlcNAc...) asparagine). Mn(2+)-binding residues include His-119, His-121, and Glu-126. Asn-143 carries an N-linked (GlcNAc...) asparagine glycan. Residue His-165 coordinates Mn(2+).

It belongs to the germin family. Oligomer (believed to be a pentamer but probably hexamer).

Its subcellular location is the secreted. It localises to the extracellular space. The protein localises to the apoplast. May play a role in plant defense. Probably has no oxalate oxidase activity even if the active site is conserved. The sequence is that of Germin-like protein subfamily T member 3 from Arabidopsis thaliana (Mouse-ear cress).